We begin with the raw amino-acid sequence, 1031 residues long: Beta-galactosidase (1031 aa).

Positions 100 and 198 each coordinate substrate. Residue Asp198 coordinates Na(+). The Mg(2+) site is built by Glu412, His414, and Glu457. Substrate-binding positions include Glu457 and 533 to 536; that span reads EYAH. Glu457 acts as the Proton donor in catalysis. Glu533 serves as the catalytic Nucleophile. A Mg(2+)-binding site is contributed by Asn593. Residues Phe597 and Asn600 each contribute to the Na(+) site. Residues Asn600 and Trp1005 each coordinate substrate.

This sequence belongs to the glycosyl hydrolase 2 family. Homotetramer. Requires Mg(2+) as cofactor. Na(+) serves as cofactor.

The catalysed reaction is Hydrolysis of terminal non-reducing beta-D-galactose residues in beta-D-galactosides.. This Vibrio vulnificus (strain YJ016) protein is Beta-galactosidase.